A 587-amino-acid polypeptide reads, in one-letter code: MRSHYCGDLRASHDGETVELCGWVSRRRDHGGVIFLDLRDRNGLVQVVFDPDTVDAFALADKVRSEYVVRLSGRVRMRDESVRNNKMATGDIEVLGKELTILNEAETPPFELDAHSAAGEEVRLKYRYMDLRRPDVLKNFQFRSRLTHVVRAFLEGEGFMDVETPILTRATPEGARDYLVPSRTHPGSFFALPQSPQLFKQLLMVAGFDRYYQIAKCFRDEDLRADRQPEFTQIDLEASFVEEEDIMGITERMVRSVFKELLSVDLPDFPRMPFSEAMQRFGSDKPDLRIALELIDIADLLAGVDFKVFSGPANDPKGRVAAMRVPGGCSLSRKDIDGYTKFVSIYGAKGLAYIKVNDLAAGAEGLQSPILKFLTEDAIKGILERTGAETGDLIFFGADKAKIVNEALGALRVKVGHDLNLVEGEWAPLWVVDFPMFEEDEGQYHALHHPFTMPSCSAEELKSNPGEALSRAYDMVLNGTELGGGSIRIHSPAMQRTVFEALGISDEEAEEKFGFLLDGLKYGAPPHGGLAFGLDRMVMLMTGCESIRDVIAFPKTQTAACTMTNAPSPVDNKQLREVGVQVRKEEG.

E173 serves as a coordination point for L-aspartate. The interval 197–200 (QLFK) is aspartate. R219 provides a ligand contact to L-aspartate. Residues 219-221 (RDE) and Q228 contribute to the ATP site. Residue H448 participates in L-aspartate binding. Residue E481 coordinates ATP. L-aspartate is bound at residue R488. 533–536 (GLDR) contacts ATP.

The protein belongs to the class-II aminoacyl-tRNA synthetase family. Type 1 subfamily. Homodimer.

It is found in the cytoplasm. It carries out the reaction tRNA(Asx) + L-aspartate + ATP = L-aspartyl-tRNA(Asx) + AMP + diphosphate. Its function is as follows. Aspartyl-tRNA synthetase with relaxed tRNA specificity since it is able to aspartylate not only its cognate tRNA(Asp) but also tRNA(Asn). Reaction proceeds in two steps: L-aspartate is first activated by ATP to form Asp-AMP and then transferred to the acceptor end of tRNA(Asp/Asn). This is Aspartate--tRNA(Asp/Asn) ligase from Alcanivorax borkumensis (strain ATCC 700651 / DSM 11573 / NCIMB 13689 / SK2).